Consider the following 757-residue polypeptide: RNA cytosine C(5)-methyltransferase NSUN2 (757 aa).

Residues 1 to 35 (MGRRARGRRFQQPPQPEGEEDASDGGRKRGQAGWE) are disordered. Phosphoserine is present on Ser23. Lys46 participates in a covalent cross-link: Glycyl lysine isopeptide (Lys-Gly) (interchain with G-Cter in SUMO2). Position 139 is a phosphoserine; by AURKB (Ser139). S-adenosyl-L-methionine contacts are provided by residues 184–190 (CAAPGSK), Asp215, Asp242, and Asp268. The active-site Nucleophile is the Cys321. A disordered region spans residues 436-504 (NKRQPKVQNK…EKKDGVCGPP (69 aa)). A phosphoserine mark is found at Ser456 and Ser473. A compositionally biased stretch (polar residues) spans 463–476 (GNPSDQSELESQMI). Residues Lys510 and Lys515 each participate in a glycyl lysine isopeptide (Lys-Gly) (interchain with G-Cter in SUMO2) cross-link. An N6-acetyllysine; alternate modification is found at Lys585. Position 585 is an N6-malonyllysine; alternate (Lys585). Residue Lys585 forms a Glycyl lysine isopeptide (Lys-Gly) (interchain with G-Cter in SUMO2); alternate linkage. Residue Ser592 is modified to Phosphoserine. Residues Lys639, Lys653, and Lys659 each participate in a glycyl lysine isopeptide (Lys-Gly) (interchain with G-Cter in SUMO2) cross-link. The interval 716–757 (LTNENAASPEQPGDEDAKQTAQDPCVPDSVPGCDAAAAEPSR) is disordered. Thr717 carries the phosphothreonine modification. The residue at position 723 (Ser723) is a Phosphoserine.

The protein belongs to the class I-like SAM-binding methyltransferase superfamily. RsmB/NOP family. TRM4 subfamily. As to quaternary structure, interacts with NPM1 and NCL during interphase; interaction is disrupted following phosphorylation at Ser-139. Post-translationally, phosphorylated at Ser-139 by AURKB during mitosis, leading to abolish methyltransferase activity and the interaction with NPM1. Ubiquitously expressed at low level. Up-regulated in tumors. Dynamically expressed during morphogenesis and in adult skin: in adult skin, expression is up-regulated in the bulge and hair germ as soon as the hair follicle enters its growing phase (anagen). During anagen, expressed at highest level in cells of the hair germ that give rise to the hair matrix.

Its subcellular location is the nucleus. It is found in the nucleolus. The protein localises to the cytoplasm. It localises to the mitochondrion. The protein resides in the cytoskeleton. Its subcellular location is the spindle. It is found in the secreted. The protein localises to the extracellular exosome. The catalysed reaction is cytidine(48) in tRNA + S-adenosyl-L-methionine = 5-methylcytidine(48) in tRNA + S-adenosyl-L-homocysteine + H(+). It catalyses the reaction cytidine(49) in tRNA + S-adenosyl-L-methionine = 5-methylcytidine(49) in tRNA + S-adenosyl-L-homocysteine + H(+). It carries out the reaction cytidine(50) in tRNA + S-adenosyl-L-methionine = 5-methylcytidine(50) in tRNA + S-adenosyl-L-homocysteine + H(+). The enzyme catalyses cytidine(34) in tRNA precursor + S-adenosyl-L-methionine = 5-methylcytidine(34) in tRNA precursor + S-adenosyl-L-homocysteine + H(+). The catalysed reaction is a cytidine in mRNA + S-adenosyl-L-methionine = a 5-methylcytidine in mRNA + S-adenosyl-L-homocysteine + H(+). Inhibited by magnesium ions. In terms of biological role, RNA cytosine C(5)-methyltransferase that methylates cytosine to 5-methylcytosine (m5C) in various RNAs, such as tRNAs, mRNAs and some long non-coding RNAs (lncRNAs). Involved in various processes, such as epidermal stem cell differentiation, testis differentiation and maternal to zygotic transition during early development: acts by increasing protein synthesis; cytosine C(5)-methylation promoting tRNA stability and preventing mRNA decay. Methylates cytosine to 5-methylcytosine (m5C) at positions 34 and 48 of intron-containing tRNA(Leu)(CAA) precursors, and at positions 48, 49 and 50 of tRNA(Gly)(GCC) precursors. tRNA methylation is required generation of RNA fragments derived from tRNAs (tRFs). Also mediates C(5)-methylation of mitochondrial tRNAs. Catalyzes cytosine C(5)-methylation of mRNAs, leading to stabilize them and prevent mRNA decay: mRNA stabilization involves YBX1 that specifically recognizes and binds m5C-modified transcripts. Cytosine C(5)-methylation of mRNAs also regulates mRNA export: methylated transcripts are specifically recognized by THOC4/ALYREF, which mediates mRNA nucleo-cytoplasmic shuttling. Also mediates cytosine C(5)-methylation of non-coding RNAs, such as vault RNAs (vtRNAs), promoting their processing into regulatory small RNAs. Cytosine C(5)-methylation of vtRNA VTRNA1.1 promotes its processing into small-vault RNA4 (svRNA4) and regulates epidermal differentiation. May act downstream of Myc to regulate epidermal cell growth and proliferation. Required for proper spindle assembly and chromosome segregation, independently of its methyltransferase activity. The sequence is that of RNA cytosine C(5)-methyltransferase NSUN2 from Mus musculus (Mouse).